The primary structure comprises 182 residues: Ribosome-recycling factor (182 aa).

This sequence belongs to the RRF family.

It localises to the cytoplasm. Its function is as follows. Responsible for the release of ribosomes from messenger RNA at the termination of protein biosynthesis. May increase the efficiency of translation by recycling ribosomes from one round of translation to another. This chain is Ribosome-recycling factor, found in Thermosynechococcus vestitus (strain NIES-2133 / IAM M-273 / BP-1).